A 119-amino-acid polypeptide reads, in one-letter code: UPF0102 protein Pmen_0910 (119 aa).

This sequence belongs to the UPF0102 family.

The chain is UPF0102 protein Pmen_0910 from Ectopseudomonas mendocina (strain ymp) (Pseudomonas mendocina).